The following is a 174-amino-acid chain: Co-chaperone protein HscB homolog (174 aa).

Residues 2 to 74 form the J domain; the sequence is NYFELFKFSP…IRRAEHMLSL (73 aa).

This sequence belongs to the HscB family. In terms of assembly, interacts with HscA and stimulates its ATPase activity.

In terms of biological role, co-chaperone involved in the maturation of iron-sulfur cluster-containing proteins. Seems to help targeting proteins to be folded toward HscA. This Shewanella baltica (strain OS223) protein is Co-chaperone protein HscB homolog.